Here is a 278-residue protein sequence, read N- to C-terminus: Shikimate dehydrogenase (NADP(+)) (278 aa).

Residues 19–21 (SRS) and Thr66 each bind shikimate. Lys70 (proton acceptor) is an active-site residue. 2 residues coordinate shikimate: Asn91 and Asp106. Residues 129–133 (GAGGA) and Phe221 contribute to the NADP(+) site. Tyr223 contributes to the shikimate binding site. Gly242 contacts NADP(+).

This sequence belongs to the shikimate dehydrogenase family. Homodimer.

The enzyme catalyses shikimate + NADP(+) = 3-dehydroshikimate + NADPH + H(+). Its pathway is metabolic intermediate biosynthesis; chorismate biosynthesis; chorismate from D-erythrose 4-phosphate and phosphoenolpyruvate: step 4/7. Its function is as follows. Involved in the biosynthesis of the chorismate, which leads to the biosynthesis of aromatic amino acids. Catalyzes the reversible NADPH linked reduction of 3-dehydroshikimate (DHSA) to yield shikimate (SA). In Anaeromyxobacter dehalogenans (strain 2CP-C), this protein is Shikimate dehydrogenase (NADP(+)).